The sequence spans 165 residues: 3-hydroxyacyl-[acyl-carrier-protein] dehydratase FabZ (165 aa).

Histidine 64 is a catalytic residue.

Belongs to the thioester dehydratase family. FabZ subfamily.

The protein resides in the cytoplasm. It carries out the reaction a (3R)-hydroxyacyl-[ACP] = a (2E)-enoyl-[ACP] + H2O. Its function is as follows. Involved in unsaturated fatty acids biosynthesis. Catalyzes the dehydration of short chain beta-hydroxyacyl-ACPs and long chain saturated and unsaturated beta-hydroxyacyl-ACPs. The protein is 3-hydroxyacyl-[acyl-carrier-protein] dehydratase FabZ of Acidiphilium cryptum (strain JF-5).